The following is a 209-amino-acid chain: Large ribosomal subunit protein uL3 (209 aa).

Q150 is modified (N5-methylglutamine).

The protein belongs to the universal ribosomal protein uL3 family. In terms of assembly, part of the 50S ribosomal subunit. Forms a cluster with proteins L14 and L19. In terms of processing, methylated by PrmB.

One of the primary rRNA binding proteins, it binds directly near the 3'-end of the 23S rRNA, where it nucleates assembly of the 50S subunit. The sequence is that of Large ribosomal subunit protein uL3 from Escherichia coli O139:H28 (strain E24377A / ETEC).